A 65-amino-acid chain; its full sequence is Large ribosomal subunit protein bL35 (65 aa).

The disordered stretch occupies residues 1–30 (MPKMKTVSGAAKRFKKTGSGRFKSKQSHLR). Positions 12-30 (KRFKKTGSGRFKSKQSHLR) are enriched in basic residues.

This sequence belongs to the bacterial ribosomal protein bL35 family.

This chain is Large ribosomal subunit protein bL35, found in Alteromonas mediterranea (strain DSM 17117 / CIP 110805 / LMG 28347 / Deep ecotype).